A 618-amino-acid polypeptide reads, in one-letter code: Proline--tRNA ligase (618 aa).

The protein belongs to the class-II aminoacyl-tRNA synthetase family. ProS type 1 subfamily. As to quaternary structure, homodimer.

The protein resides in the cytoplasm. It carries out the reaction tRNA(Pro) + L-proline + ATP = L-prolyl-tRNA(Pro) + AMP + diphosphate. Catalyzes the attachment of proline to tRNA(Pro) in a two-step reaction: proline is first activated by ATP to form Pro-AMP and then transferred to the acceptor end of tRNA(Pro). As ProRS can inadvertently accommodate and process non-cognate amino acids such as alanine and cysteine, to avoid such errors it has two additional distinct editing activities against alanine. One activity is designated as 'pretransfer' editing and involves the tRNA(Pro)-independent hydrolysis of activated Ala-AMP. The other activity is designated 'posttransfer' editing and involves deacylation of mischarged Ala-tRNA(Pro). The misacylated Cys-tRNA(Pro) is not edited by ProRS. This Streptococcus pyogenes serotype M28 (strain MGAS6180) protein is Proline--tRNA ligase.